The primary structure comprises 82 residues: Small ribosomal subunit protein bS16c (82 aa).

It belongs to the bacterial ribosomal protein bS16 family.

It localises to the plastid. Its subcellular location is the chloroplast. This Pyropia yezoensis (Susabi-nori) protein is Small ribosomal subunit protein bS16c.